The chain runs to 205 residues: Urease accessory protein UreG (205 aa).

Residue 10 to 17 (GPVGAGKT) participates in GTP binding.

Belongs to the SIMIBI class G3E GTPase family. UreG subfamily. Homodimer. UreD, UreF and UreG form a complex that acts as a GTP-hydrolysis-dependent molecular chaperone, activating the urease apoprotein by helping to assemble the nickel containing metallocenter of UreC. The UreE protein probably delivers the nickel.

It is found in the cytoplasm. Facilitates the functional incorporation of the urease nickel metallocenter. This process requires GTP hydrolysis, probably effectuated by UreG. In Corynebacterium glutamicum (strain R), this protein is Urease accessory protein UreG.